Reading from the N-terminus, the 270-residue chain is 25S rRNA adenine-N(1) methyltransferase (270 aa).

S-adenosyl-L-methionine contacts are provided by G111 and D131.

This sequence belongs to the BMT2 family.

It localises to the nucleus. Its subcellular location is the nucleolus. Functionally, S-adenosyl-L-methionine-dependent methyltransferase that specifically methylates the N(1) position of an adenine present in helix 65 in 25S rRNA. The chain is 25S rRNA adenine-N(1) methyltransferase from Schizosaccharomyces pombe (strain 972 / ATCC 24843) (Fission yeast).